The primary structure comprises 492 residues: Fumarate hydratase 1, mitochondrial (492 aa).

The N-terminal 28 residues, 1 to 28 (MSIYVASRRLSGGTTVTALRYATSLRSY), are a transit peptide targeting the mitochondrion. Residues 127–129 (SGT), 157–160 (HPND), 167–169 (SSN), and threonine 215 contribute to the substrate site. The active-site Proton donor/acceptor is the histidine 216. Residue serine 346 is part of the active site. Substrate contacts are provided by residues serine 347 and 352 to 354 (KVN).

It belongs to the class-II fumarase/aspartase family. Fumarase subfamily. As to quaternary structure, homotetramer.

It localises to the mitochondrion. The enzyme catalyses (S)-malate = fumarate + H2O. It functions in the pathway carbohydrate metabolism; tricarboxylic acid cycle; (S)-malate from fumarate: step 1/1. With respect to regulation, fumarate hydratase activity (fumarate to L-malate) is strongly inhibited by phosphoenolpyruvate, citrate, oxaloacetate, ATP and ADP. Malate dehydratase activity (malate to fumarate) is activated by oxaloacetate, pyruvate, Asn and Gln. Malate dehydratase activity (malate to fumarate) is inhibited by citrate, succinate, ADP, ATP, glucose-6P and phosphoenolpyruvate. Catalyzes the reversible stereospecific interconversion of fumarate to L-malate. Catalyzes the hydration of fumarate to L-malate in the tricarboxylic acid (TCA) cycle to facilitate a transition step in the production of energy in the form of NADH. This chain is Fumarate hydratase 1, mitochondrial, found in Arabidopsis thaliana (Mouse-ear cress).